The sequence spans 547 residues: Chaperonin GroEL (547 aa).

ATP is bound by residues 30–33 (TLGP), K51, 87–91 (DGTTT), G415, 479–481 (NAA), and D495.

It belongs to the chaperonin (HSP60) family. Forms a cylinder of 14 subunits composed of two heptameric rings stacked back-to-back. Interacts with the co-chaperonin GroES.

It is found in the cytoplasm. It catalyses the reaction ATP + H2O + a folded polypeptide = ADP + phosphate + an unfolded polypeptide.. Its function is as follows. Together with its co-chaperonin GroES, plays an essential role in assisting protein folding. The GroEL-GroES system forms a nano-cage that allows encapsulation of the non-native substrate proteins and provides a physical environment optimized to promote and accelerate protein folding. The chain is Chaperonin GroEL from Nitratidesulfovibrio vulgaris (strain ATCC 29579 / DSM 644 / CCUG 34227 / NCIMB 8303 / VKM B-1760 / Hildenborough) (Desulfovibrio vulgaris).